The following is a 130-amino-acid chain: Small ribosomal subunit protein uS11c (130 aa).

This sequence belongs to the universal ribosomal protein uS11 family. In terms of assembly, part of the 30S ribosomal subunit.

The protein localises to the plastid. It localises to the chloroplast. This Angiopteris evecta (Mule's foot fern) protein is Small ribosomal subunit protein uS11c.